The primary structure comprises 758 residues: 52 kDa repressor of the inhibitor of the protein kinase (758 aa).

The THAP-type zinc-finger motif lies at 1–86 (MPNFCAAPNC…LRDNAIPTIF (86 aa)). Residues 116-141 (QKKIEETSEQEQETNTNAQNPSAEAV) are disordered. S563 is modified (phosphoserine).

As to quaternary structure, interacts with DNAJC3, probably sequestring it.

In terms of biological role, upstream regulator of interferon-induced serine/threonine protein kinase R (PKR). May block the PKR-inhibitory function of DNAJC3, resulting in restoration of kinase activity and suppression of cell growth. This Mus musculus (Mouse) protein is 52 kDa repressor of the inhibitor of the protein kinase.